The following is a 339-amino-acid chain: DNA-directed RNA polymerase subunit alpha (339 aa).

Positions 1 to 235 are alpha N-terminal domain (alpha-NTD); it reads MVIQKNWQEL…DQLQVFVNFE (235 aa). The interval 251–339 is alpha C-terminal domain (alpha-CTD); it reads FNPALLKKVD…DLAKRFEEHY (89 aa).

It belongs to the RNA polymerase alpha chain family. Homodimer. The RNAP catalytic core consists of 2 alpha, 1 beta, 1 beta' and 1 omega subunit. When a sigma factor is associated with the core the holoenzyme is formed, which can initiate transcription.

The catalysed reaction is RNA(n) + a ribonucleoside 5'-triphosphate = RNA(n+1) + diphosphate. Its function is as follows. DNA-dependent RNA polymerase catalyzes the transcription of DNA into RNA using the four ribonucleoside triphosphates as substrates. The chain is DNA-directed RNA polymerase subunit alpha from Methylorubrum populi (strain ATCC BAA-705 / NCIMB 13946 / BJ001) (Methylobacterium populi).